Reading from the N-terminus, the 331-residue chain is 6-phosphogluconolactonase (331 aa).

An N6-acetyllysine modification is found at lysine 287.

This sequence belongs to the cycloisomerase 2 family.

The catalysed reaction is 6-phospho-D-glucono-1,5-lactone + H2O = 6-phospho-D-gluconate + H(+). The protein operates within carbohydrate degradation; pentose phosphate pathway; D-ribulose 5-phosphate from D-glucose 6-phosphate (oxidative stage): step 2/3. In terms of biological role, catalyzes the hydrolysis of 6-phosphogluconolactone to 6-phosphogluconate. The polypeptide is 6-phosphogluconolactonase (Escherichia coli O139:H28 (strain E24377A / ETEC)).